The sequence spans 173 residues: T-cell receptor beta-1 chain C region (173 aa).

Positions 1–146 are c region; the sequence is EDLRNVTPPK…GVLSATILYE (146 aa). Cys-31 and Cys-71 are oxidised to a cystine. N-linked (GlcNAc...) asparagine glycosylation is found at Asn-67 and Asn-116. A helical transmembrane segment spans residues 146-167; that stretch reads EILLGKATLYAVLVSTLVVMAM. Residues 168–173 lie on the Cytoplasmic side of the membrane; the sequence is VKRKNS.

The protein resides in the membrane. In Mus musculus (Mouse), this protein is T-cell receptor beta-1 chain C region.